The following is a 255-amino-acid chain: Putative keratin-87 protein (255 aa).

An IF rod domain is found at 1-255 (MEANSGRLAS…SRGCVRALVL (255 aa)). Coiled-coil stretches lie at residues 19-81 (LEGY…EIRV) and 147-227 (LRRT…VMNS).

It belongs to the intermediate filament family. Heterotetramer of two type I and two type II keratins.

The protein is Putative keratin-87 protein (KRT87P) of Homo sapiens (Human).